A 501-amino-acid chain; its full sequence is Sensor histidine kinase PdtaS (501 aa).

The interval 4–150 is GAF; it reads LGDLLAEHTV…HLETAYRLCA (147 aa). Residues 179–291 are PAS-like; the sequence is DGFIRLDVDG…TEVKRRDRAL (113 aa). Residues 300–495 enclose the Histidine kinase domain; the sequence is EIHHRVKNNL…DVVLRVPVGR (196 aa). H303 is modified (phosphohistidine; by autocatalysis).

Post-translationally, autophosphorylated.

The protein localises to the cytoplasm. It catalyses the reaction ATP + protein L-histidine = ADP + protein N-phospho-L-histidine.. In terms of biological role, member of the two-component regulatory system PdtaR/PdtaS. This two-component system plays an essential role in mycobacterial adaptation to poor nutrient conditions. Nutrient deprivation results in increasing intracellular concentrations of cyclic diguanosine monophosphate (c-di-GMP), which binds to the PdtaS sensor and promotes its autophosphorylation, leading to the activation of the signaling cascade. The phosphate group is then transferred to PdtaR. In addition, the PdtaR/PdtaS two-component system controls copper and nitric oxide (NO) resistance downstream of the intramembrane protease Rip1. This coupled Rip1/PdtaS/PdtaR circuit controls NO resistance and acute lung infection in mice by relieving PdtaR/PdtaS-mediated repression of isonitrile chalkophore biosynthesis. Two signals are required to fully inactivate the PdtaR/PdtaS system and mediate NO resistance: a cytoplasmic inhibitory signal through the PdtaS kinase mediated by direct sensing of NO and the production of PPE1-5', an NO-induced small RNA, to sequester PdtaR. The sequence is that of Sensor histidine kinase PdtaS (pdtaS) from Mycobacterium tuberculosis (strain CDC 1551 / Oshkosh).